The sequence spans 362 residues: uncharacterized protein (362 aa).

3 disordered regions span residues 1–117 (MASK…GLNR), 153–172 (SSAP…GIRK), and 210–266 (RHFD…SSSN). Positions 12 to 23 (AKKEKEIKKEIE) are enriched in basic and acidic residues. Acidic residues predominate over residues 51-70 (ENDDTDGDGKEEDAQKEDDI). Low complexity-rich tracts occupy residues 100–112 (NSPP…TRNT), 153–167 (SSAP…GSPS), and 241–265 (VPPS…TSSS).

This is an uncharacterized protein from Caenorhabditis elegans.